Here is a 232-residue protein sequence, read N- to C-terminus: Flagellar L-ring protein (232 aa).

The signal sequence occupies residues methionine 1–glycine 21. Cysteine 22 carries the N-palmitoyl cysteine lipid modification. A lipid anchor (S-diacylglycerol cysteine) is attached at cysteine 22.

Belongs to the FlgH family. In terms of assembly, the basal body constitutes a major portion of the flagellar organelle and consists of four rings (L,P,S, and M) mounted on a central rod.

The protein resides in the cell outer membrane. The protein localises to the bacterial flagellum basal body. Assembles around the rod to form the L-ring and probably protects the motor/basal body from shearing forces during rotation. In Shigella dysenteriae serotype 1 (strain Sd197), this protein is Flagellar L-ring protein.